The chain runs to 318 residues: Pantothenate synthetase (318 aa).

44 to 51 contributes to the ATP binding site; that stretch reads MGALHQGH. Residue H51 is the Proton donor of the active site. Residue Q75 coordinates (R)-pantoate. Beta-alanine is bound at residue Q75. 161–164 contributes to the ATP binding site; sequence GEKD. Q167 lines the (R)-pantoate pocket. Residues V190 and 198-201 each bind ATP; that span reads LSSR. The disordered stretch occupies residues 295–318; sequence DGHPNLDSQPEPAGTDPALLPPAR.

Belongs to the pantothenate synthetase family. Homodimer.

The protein localises to the cytoplasm. It carries out the reaction (R)-pantoate + beta-alanine + ATP = (R)-pantothenate + AMP + diphosphate + H(+). It participates in cofactor biosynthesis; (R)-pantothenate biosynthesis; (R)-pantothenate from (R)-pantoate and beta-alanine: step 1/1. Catalyzes the condensation of pantoate with beta-alanine in an ATP-dependent reaction via a pantoyl-adenylate intermediate. The polypeptide is Pantothenate synthetase (Nocardia farcinica (strain IFM 10152)).